The sequence spans 224 residues: Cutinase 1 (224 aa).

Positions 1–16 are cleaved as a signal peptide; it reads MKFLSVLSLAITLAAA. A disulfide bridge links Cys46 with Cys125. Catalysis depends on Ser136, which acts as the Nucleophile. Residues Cys187 and Cys194 are joined by a disulfide bond. Asp191 is a catalytic residue. Residue His204 is the Proton donor/acceptor of the active site.

This sequence belongs to the cutinase family. Post-translationally, the 2 disulfide bonds play a critical role in holding the catalytic residues in juxta-position; reduction of the disulfide bridges results in the complete inactivation of the enzyme. In terms of processing, the N-terminus is blocked.

It localises to the secreted. The enzyme catalyses cutin + H2O = cutin monomers.. Its activity is regulated as follows. Inhibited by diisopropyl fluorophosphate (DFP). Its function is as follows. Catalyzes the hydrolysis of complex carboxylic polyesters found in the cell wall of plants. Degrades cutin, a macromolecule that forms the structure of the plant cuticle. Allows pathogenic fungi to penetrate through the cuticular barrier into the host plant during the initial stage of fungal infection. The chain is Cutinase 1 (CUTA) from Colletotrichum gloeosporioides (Anthracnose fungus).